Here is a 281-residue protein sequence, read N- to C-terminus: NADPH-dependent 7-cyano-7-deazaguanine reductase (281 aa).

81-83 (IES) serves as a coordination point for substrate. 83 to 84 (SK) contributes to the NADPH binding site. Cys188 functions as the Thioimide intermediate in the catalytic mechanism. The active-site Proton donor is the Asp195. 227 to 228 (HE) is a substrate binding site. Residue 256 to 257 (RG) participates in NADPH binding.

This sequence belongs to the GTP cyclohydrolase I family. QueF type 2 subfamily. Homodimer.

The protein resides in the cytoplasm. The enzyme catalyses 7-aminomethyl-7-carbaguanine + 2 NADP(+) = 7-cyano-7-deazaguanine + 2 NADPH + 3 H(+). Its pathway is tRNA modification; tRNA-queuosine biosynthesis. In terms of biological role, catalyzes the NADPH-dependent reduction of 7-cyano-7-deazaguanine (preQ0) to 7-aminomethyl-7-deazaguanine (preQ1). In Polaromonas naphthalenivorans (strain CJ2), this protein is NADPH-dependent 7-cyano-7-deazaguanine reductase.